We begin with the raw amino-acid sequence, 338 residues long: Taste receptor type 2 member 39 (338 aa).

The Extracellular segment spans residues 1 to 30; the sequence is MLGRCFPPDTKEKQQLRMTKLCDPAESELS. A helical transmembrane segment spans residues 31–51; that stretch reads PFLITLILAVLLAEYLIGIIA. Residues 52–74 are Cytoplasmic-facing; the sequence is NGFIMAIHAAEWVQNKAVSTSGR. Residues 75-95 traverse the membrane as a helical segment; sequence ILVFLSVSRIALQSLMMLEIT. Over 96–116 the chain is Extracellular; it reads ISSTSLSFYSEDAVYYAFKIS. A helical membrane pass occupies residues 117 to 137; it reads FIFLNFCSLWFAAWLSFFYFV. At 138–156 the chain is on the cytoplasmic side; sequence KIANFSYPLFLKLRWRITG. Residues 157–177 traverse the membrane as a helical segment; sequence LIPWLLWLSVFISFSHSMFCI. The Extracellular portion of the chain corresponds to 178 to 205; it reads NICTVYCNNSFPIHSSNSTKKTYLSEIN. 2 N-linked (GlcNAc...) asparagine glycosylation sites follow: Asn-185 and Asn-194. Residues 206 to 226 traverse the membrane as a helical segment; the sequence is VVGLAFFFNLGIVTPLIMFIL. Over 227 to 262 the chain is Cytoplasmic; the sequence is TATLLILSLKRHTLHMGSNATGSNDPSMEAHMGAIK. A helical transmembrane segment spans residues 263–283; that stretch reads AISYFLILYIFNAVALFIYLS. The Extracellular portion of the chain corresponds to 284-291; that stretch reads NMFDINSL. Residues 292–312 traverse the membrane as a helical segment; the sequence is WNNLCQIIMAAYPAGHSILPI. At 313-338 the chain is on the cytoplasmic side; it reads QDNPGLRRAWKRLQLRLHLYPKEWTL.

Belongs to the G-protein coupled receptor T2R family.

Its subcellular location is the membrane. Receptor that may play a role in the perception of bitterness and is gustducin-linked. May play a role in sensing the chemical composition of the gastrointestinal content. The activity of this receptor may stimulate alpha gustducin, mediate PLC-beta-2 activation and lead to the gating of TRPM5. The sequence is that of Taste receptor type 2 member 39 (TAS2R39) from Pan paniscus (Pygmy chimpanzee).